We begin with the raw amino-acid sequence, 306 residues long: Homoserine kinase (306 aa).

84–94 (PAGLGLGSSGA) is a binding site for ATP.

This sequence belongs to the GHMP kinase family. Homoserine kinase subfamily.

It is found in the cytoplasm. The enzyme catalyses L-homoserine + ATP = O-phospho-L-homoserine + ADP + H(+). Its pathway is amino-acid biosynthesis; L-threonine biosynthesis; L-threonine from L-aspartate: step 4/5. Its function is as follows. Catalyzes the ATP-dependent phosphorylation of L-homoserine to L-homoserine phosphate. In Sulfurisphaera tokodaii (strain DSM 16993 / JCM 10545 / NBRC 100140 / 7) (Sulfolobus tokodaii), this protein is Homoserine kinase.